Here is a 117-residue protein sequence, read N- to C-terminus: MLYETIGIVRPGNIAEVKELVLTAGKLILNQGGVIRDIKNWGTFLLPRPISTNQQRHNRGHYFVMRYDASIATHEEVRRTMKADPRVIRTANVKLGDGKLETLSRFGAIPWRSLEEA.

It belongs to the bacterial ribosomal protein bS6 family. As to quaternary structure, component of the mitochondrial small ribosomal subunit (mt-SSU). Mature N.crassa 74S mitochondrial ribosomes consist of a small (37S) and a large (54S) subunit. The 37S small subunit contains a 16S ribosomal RNA (16S mt-rRNA) and 32 different proteins. The 54S large subunit contains a 23S rRNA (23S mt-rRNA) and 42 different proteins.

It is found in the mitochondrion. Component of the mitochondrial ribosome (mitoribosome), a dedicated translation machinery responsible for the synthesis of mitochondrial genome-encoded proteins, including at least some of the essential transmembrane subunits of the mitochondrial respiratory chain. The mitoribosomes are attached to the mitochondrial inner membrane and translation products are cotranslationally integrated into the membrane. This is Small ribosomal subunit protein bS6m (mrp17) from Neurospora crassa (strain ATCC 24698 / 74-OR23-1A / CBS 708.71 / DSM 1257 / FGSC 987).